The chain runs to 198 residues: Large ribosomal subunit protein bL12m (198 aa).

Residues 1 to 36 constitute a mitochondrion transit peptide; the sequence is MLPSATSLLRGPCLGLRAAALRLVRQQVPHVCAVRL. Low complexity predominate over residues 106–115; it reads GAAPAPTAPE. The tract at residues 106–126 is disordered; the sequence is GAAPAPTAPEAAEEDVPKQKE. Residues Lys125, Lys138, Lys142, and Lys144 each carry the N6-acetyllysine modification. Residue Lys150 is modified to N6-acetyllysine; alternate. Residue Lys150 is modified to N6-succinyllysine; alternate. Lys150 is covalently cross-linked (Glycyl lysine isopeptide (Lys-Gly) (interchain with G-Cter in ubiquitin)). Position 162 is an N6-succinyllysine (Lys162). An N6-acetyllysine mark is found at Lys163 and Lys173. Lys178 bears the N6-acetyllysine; alternate mark. Lys178 is subject to N6-succinyllysine; alternate. At Lys185 the chain carries N6-acetyllysine.

This sequence belongs to the bacterial ribosomal protein bL12 family. Component of the mitochondrial ribosome large subunit (39S) which comprises a 16S rRNA and about 50 distinct proteins. Interacts with NOA1. Two mature forms are produced by differential two-step proteolytic cleavage. Cleaved by the mitochondrial processing protease to produce the long mature form and subsequently by the mitochondrial intermediate protease to produce the short mature form. Post-translationally, in the presence of CUL3, undergoes 'Lys-63'-linked ubiquitination at Lys-150 which results in proteasomal degradation.

It is found in the mitochondrion matrix. As a component of the mitochondrial large ribosomal subunit, plays a role in mitochondrial translation. When present in mitochondria as a free protein not associated with the ribosome, associates with mitochondrial RNA polymerase POLRMT to activate transcription. Required for POLRMT stability. The polypeptide is Large ribosomal subunit protein bL12m (MRPL12) (Bos taurus (Bovine)).